The chain runs to 247 residues: 5-oxoprolinase subunit A (247 aa).

This sequence belongs to the LamB/PxpA family. Forms a complex composed of PxpA, PxpB and PxpC.

It carries out the reaction 5-oxo-L-proline + ATP + 2 H2O = L-glutamate + ADP + phosphate + H(+). Functionally, catalyzes the cleavage of 5-oxoproline to form L-glutamate coupled to the hydrolysis of ATP to ADP and inorganic phosphate. This is 5-oxoprolinase subunit A from Histophilus somni (strain 129Pt) (Haemophilus somnus).